The primary structure comprises 194 residues: FMN-dependent NADH:quinone oxidoreductase (194 aa).

Residues serine 10 and 90–93 (MYNL) each bind FMN.

Belongs to the azoreductase type 1 family. Homodimer. The cofactor is FMN.

It carries out the reaction 2 a quinone + NADH + H(+) = 2 a 1,4-benzosemiquinone + NAD(+). The enzyme catalyses N,N-dimethyl-1,4-phenylenediamine + anthranilate + 2 NAD(+) = 2-(4-dimethylaminophenyl)diazenylbenzoate + 2 NADH + 2 H(+). Its function is as follows. Quinone reductase that provides resistance to thiol-specific stress caused by electrophilic quinones. Functionally, also exhibits azoreductase activity. Catalyzes the reductive cleavage of the azo bond in aromatic azo compounds to the corresponding amines. The polypeptide is FMN-dependent NADH:quinone oxidoreductase (Haemophilus influenzae (strain PittEE)).